The following is a 274-amino-acid chain: F-box protein SKIP5 (274 aa).

Residues 32–79 (LTSLNNLDDGCLMHILSFLSPIPDRYNTALVCHRWRYLACHPRLWLRV) form the F-box domain.

In terms of assembly, part of a SCF (SKP1-cullin-F-box) protein ligase complex. Interacts with SKP1A/ASK1.

It functions in the pathway protein modification; protein ubiquitination. The protein is F-box protein SKIP5 (SKIP5) of Arabidopsis thaliana (Mouse-ear cress).